A 75-amino-acid chain; its full sequence is Large ribosomal subunit protein uL24c (75 aa).

The protein belongs to the universal ribosomal protein uL24 family. As to quaternary structure, part of the 50S ribosomal subunit.

Its subcellular location is the plastid. It is found in the chloroplast. Its function is as follows. One of two assembly initiator proteins, it binds directly to the 5'-end of the 23S rRNA, where it nucleates assembly of the 50S subunit. The protein is Large ribosomal subunit protein uL24c (rpl24) of Cyanidioschyzon merolae (strain NIES-3377 / 10D) (Unicellular red alga).